Here is a 766-residue protein sequence, read N- to C-terminus: U3 small nucleolar RNA-associated protein 14 homolog C (766 aa).

The segment at 14-42 (HQEELVDLPKNYPLSENEDEGDSDGERKH) is disordered. Phosphoserine occurs at positions 28, 51, 76, and 80. Residue Lys121 forms a Glycyl lysine isopeptide (Lys-Gly) (interchain with G-Cter in SUMO2) linkage. Thr204 bears the Phosphothreonine mark. Coiled-coil stretches lie at residues 216–245 (LEEA…KEKK) and 316–346 (LEAR…EEEE). Residues 365-563 (MNVDGPNPWM…EQLINLQNFL (199 aa)) are disordered. The segment covering 396–405 (ELAAHEVSAS) has biased composition (low complexity). Residues Ser403 and Ser405 each carry the phosphoserine modification. Residues 407 to 434 (AEERPVAEEEILLREFEERQSLRKRSEL) show a composition bias toward basic and acidic residues. Position 443 is a phosphoserine (Ser443). Lys447 is covalently cross-linked (Glycyl lysine isopeptide (Lys-Gly) (interchain with G-Cter in SUMO2)). A Phosphoserine modification is found at Ser451. The stretch at 452–470 (QEVLSELRALSQKLKEKHQ) forms a coiled coil. Positions 466 to 475 (KEKHQSRKQK) are enriched in basic residues. Residues 502–527 (RSERVQTLEELEELGKEDCFQNKELP) show a composition bias toward basic and acidic residues. Lys517 participates in a covalent cross-link: Glycyl lysine isopeptide (Lys-Gly) (interchain with G-Cter in SUMO2). Residues 533-542 (GQQSERTPNN) are compositionally biased toward polar residues. Positions 545–555 (DAPKEKKEKEQ) are enriched in basic and acidic residues. Ser567 carries the post-translational modification Phosphoserine. Lys732 is covalently cross-linked (Glycyl lysine isopeptide (Lys-Gly) (interchain with G-Cter in SUMO2)). Positions 734–766 (EDVGYQSSSRSDLPVIQRNPKRITTRHNKEEKL) are disordered.

The protein belongs to the UTP14 family. In terms of tissue distribution, expressed in testis.

Its subcellular location is the nucleus. The protein resides in the nucleolus. Its function is as follows. Essential for spermatogenesis. May be required specifically for ribosome biogenesis and hence protein synthesis during male meiosis. This Homo sapiens (Human) protein is U3 small nucleolar RNA-associated protein 14 homolog C (UTP14C).